We begin with the raw amino-acid sequence, 334 residues long: Cytoskeleton protein RodZ (334 aa).

Residues 1–111 (MNTEATHDQN…LGKRRKKRDG (111 aa)) lie on the Cytoplasmic side of the membrane. Residues 19-71 (LRNAREQLGLSQQAVAERLCLKVSTVRDIEEDKAPSDLASTFLRGYIRSYARL) enclose the HTH cro/C1-type domain. A DNA-binding region (H-T-H motif) is located at residues 30-49 (QQAVAERLCLKVSTVRDIEE). A helical; Signal-anchor for type II membrane protein transmembrane segment spans residues 112-132 (WLMSFTWLVLFVVVGLTGAWW). Residues 133–334 (WQNHKAQQEE…TLNAEPTPAQ (202 aa)) are Periplasmic-facing. The tract at residues 155–241 (NADKDSGQSV…PSALPTSQAG (87 aa)) is disordered. Over residues 161-175 (GQSVPLDTGAVTSQD) the composition is skewed to polar residues. 2 stretches are compositionally biased toward low complexity: residues 176–211 (TTPAQTAPAPATPVDSTAATQTPAPTAAATQNTVVA) and 219–241 (TAATSAAPAATETPSALPTSQAG).

Belongs to the RodZ family.

It localises to the cell inner membrane. In terms of biological role, cytoskeletal protein that is involved in cell-shape control through regulation of the length of the long axis. The polypeptide is Cytoskeleton protein RodZ (Salmonella dublin (strain CT_02021853)).